Here is a 207-residue protein sequence, read N- to C-terminus: NAD(P)H dehydrogenase (quinone) (207 aa).

One can recognise a Flavodoxin-like domain in the interval 3 to 194; that stretch reads VQIIFYSMYG…EMAKFQGRHV (192 aa). FMN-binding positions include 9-14 and 82-84; these read SMYGHI and TRF. Tyr-11 is an NAD(+) binding site. Trp-102 contributes to the substrate binding site. Residues 117 to 123 and His-138 each bind FMN; that span reads STATQHG.

It belongs to the WrbA family. FMN is required as a cofactor.

The catalysed reaction is a quinone + NADH + H(+) = a quinol + NAD(+). It catalyses the reaction a quinone + NADPH + H(+) = a quinol + NADP(+). The protein is NAD(P)H dehydrogenase (quinone) of Aromatoleum aromaticum (strain DSM 19018 / LMG 30748 / EbN1) (Azoarcus sp. (strain EbN1)).